The primary structure comprises 126 residues: Adenosine 5'-monophosphoramidase HINT1 (126 aa).

The residue at position 2 (Ala-2) is an N-acetylalanine. The 109-residue stretch at 18–126 (IFGKIIRKEI…GGRQMNWPPG (109 aa)) folds into the HIT domain. An N6-acetyllysine mark is found at Lys-21 and Lys-30. 43–44 (DI) serves as a coordination point for AMP. Phosphoserine occurs at positions 45 and 72. AMP contacts are provided by residues Asn-99, 105-107 (GQS), and 112-114 (HLH). The short motif at 110–114 (HVHLH) is the Histidine triad motif element. The Tele-AMP-histidine intermediate role is filled by His-112.

It belongs to the HINT family. As to quaternary structure, homodimer. Interacts with CDK7. Interacts with RUVBL1 and RUVBL2 and is associated with the LEF1/TCF1-CTNNB1 complex and with a KAT5 histone acetyltransferase complex. Identified in a complex with MITF and CTNNB1. Interacts with CDC34 and RBX1, and is part of a SCF (SKP2-CUL1-F-box protein) E3 ubiquitin-protein ligase complex. Interacts with SUMO1, SUMO2 and RGS17. Interacts with the Ten-1 ICD form of TENM1. Interacts with CALM1; interaction increases in the presence of calcium ions. In terms of tissue distribution, widely expressed.

Its subcellular location is the cytoplasm. It localises to the nucleus. The catalysed reaction is adenosine 5'-phosphoramidate + H2O = AMP + NH4(+). Functionally, exhibits adenosine 5'-monophosphoramidase activity, hydrolyzing purine nucleotide phosphoramidates with a single phosphate group such as adenosine 5'monophosphoramidate (AMP-NH2) to yield AMP and NH2. Hydrolyzes adenosine 5'monophosphomorpholidate (AMP-morpholidate) and guanosine 5'monophosphomorpholidate (GMP-morpholidate). Hydrolyzes lysyl-AMP (AMP-N-epsilon-(N-alpha-acetyl lysine methyl ester)) generated by lysine tRNA ligase, as well as Met-AMP, His-AMP and Asp-AMP, lysyl-GMP (GMP-N-epsilon-(N-alpha-acetyl lysine methyl ester)) and AMP-N-alanine methyl ester. Can also convert adenosine 5'-O-phosphorothioate and guanosine 5'-O-phosphorothioate to the corresponding nucleoside 5'-O-phosphates with concomitant release of hydrogen sulfide. In addition, functions as a scaffolding protein that modulates transcriptional activation by the LEF1/TCF1-CTNNB1 complex and by the complex formed with MITF and CTNNB1. Modulates p53/TP53 levels and p53/TP53-mediated apoptosis. Modulates proteasomal degradation of target proteins by the SCF (SKP2-CUL1-F-box protein) E3 ubiquitin-protein ligase complex. Also exhibits SUMO-specific isopeptidase activity, deconjugating SUMO1 from RANGAP1 and RGS17. The polypeptide is Adenosine 5'-monophosphoramidase HINT1 (HINT1) (Bos taurus (Bovine)).